The primary structure comprises 69 residues: Putative membrane protein insertion efficiency factor (69 aa).

This sequence belongs to the UPF0161 family.

It localises to the cell inner membrane. Could be involved in insertion of integral membrane proteins into the membrane. The protein is Putative membrane protein insertion efficiency factor of Novosphingobium aromaticivorans (strain ATCC 700278 / DSM 12444 / CCUG 56034 / CIP 105152 / NBRC 16084 / F199).